The primary structure comprises 290 residues: UPF0761 membrane protein YihY (290 aa).

Helical transmembrane passes span L44 to F64, V104 to L124, F140 to I160, I183 to I203, A210 to L230, and V244 to L264.

The protein belongs to the UPF0761 family.

It localises to the cell inner membrane. The sequence is that of UPF0761 membrane protein YihY from Escherichia coli O139:H28 (strain E24377A / ETEC).